A 240-amino-acid polypeptide reads, in one-letter code: Vesicle-associated membrane protein 727 (240 aa).

Residues 1–215 (MSQKGLIYSF…MWLQSLQMKL (215 aa)) lie on the Cytoplasmic side of the membrane. Residues 6-133 (LIYSFVAKGT…NLDREFGPIL (128 aa)) enclose the Longin domain. In terms of domain architecture, v-SNARE coiled-coil homology spans 149–209 (KLSKLKAQIT…RQLRRKMWLQ (61 aa)). The chain crosses the membrane as a helical; Anchor for type IV membrane protein span at residues 216–236 (MVAGAVFSFILIVWVVACGGF). The Vesicular portion of the chain corresponds to 237–240 (KCSS).

The protein belongs to the synaptobrevin family. In terms of assembly, interacts with subunits of the class C core vacuole/endosome tethering (CORVET) complex including VPS11, VCL1, VPS18, VPS33, VPS3 and VPS8. As to expression, highly expressed in flowers. Detected in leaves, stems and roots.

The protein localises to the early endosome membrane. The protein resides in the endosome membrane. Functionally, involved in the targeting and/or fusion of transport vesicles to their target membrane. The protein is Vesicle-associated membrane protein 727 (VAMP727) of Arabidopsis thaliana (Mouse-ear cress).